Here is a 313-residue protein sequence, read N- to C-terminus: UPF0761 membrane protein VS_0126 (313 aa).

A run of 6 helical transmembrane segments spans residues Tyr41–Leu61, Met104–Asp124, Ala139–Ala159, Val185–Val205, Ala217–Ile237, and Ala249–Val269. The span at Glu281–Val290 shows a compositional bias: polar residues. The interval Glu281–Lys313 is disordered.

Belongs to the UPF0761 family.

The protein localises to the cell inner membrane. This is UPF0761 membrane protein VS_0126 from Vibrio atlanticus (strain LGP32) (Vibrio splendidus (strain Mel32)).